Consider the following 213-residue polypeptide: Cytochrome b-c1 complex subunit Rieske, mitochondrial (213 aa).

The N-terminal 29 residues, 1 to 29 (MSSLAFRTLRNGLGLKSSVRALSTTTTTL), are a transit peptide targeting the mitochondrion. At 30–47 (SNYQQPDYSSYLNNKSGQ) the chain is on the mitochondrial matrix side. Residues 48 to 77 (GSRNFTYFMVGSMGLLSAAGAKSTVEAFLS) form a helical membrane-spanning segment. The Mitochondrial intermembrane segment spans residues 78–213 (SFAASADVLA…FTDDETLLVG (136 aa)). A Rieske domain is found at 116–211 (RHRTADEIEE…YDFTDDETLL (96 aa)). Cys156, His158, Cys175, and His178 together coordinate [2Fe-2S] cluster. Cys161 and Cys177 are oxidised to a cystine.

It belongs to the Rieske iron-sulfur protein family. Component of the ubiquinol-cytochrome c oxidoreductase (cytochrome b-c1 complex, complex III, CIII), a multisubunit enzyme composed of 10 subunits. The complex is composed of 3 respiratory subunits cytochrome b (COB), cytochrome c1 (CYT1) and Rieske protein (RIP1), 2 core protein subunits COR1 and QCR2, and 5 low-molecular weight protein subunits QCR6, QCR7, QCR8, QCR9 and QCR10. The complex exists as an obligatory dimer and forms supercomplexes (SCs) in the inner mitochondrial membrane with a monomer or a dimer of cytochrome c oxidase (complex IV, CIV), resulting in 2 different assemblies (supercomplexes III(2)IV and III(2)IV(2)). Requires [2Fe-2S] cluster as cofactor.

The protein localises to the mitochondrion inner membrane. It carries out the reaction a quinol + 2 Fe(III)-[cytochrome c](out) = a quinone + 2 Fe(II)-[cytochrome c](out) + 2 H(+)(out). Component of the ubiquinol-cytochrome c oxidoreductase, a multisubunit transmembrane complex that is part of the mitochondrial electron transport chain which drives oxidative phosphorylation. The complex plays an important role in the uptake of multiple carbon sources present in different host niches. The chain is Cytochrome b-c1 complex subunit Rieske, mitochondrial from Candida albicans (strain SC5314 / ATCC MYA-2876) (Yeast).